We begin with the raw amino-acid sequence, 346 residues long: tRNA N6-adenosine threonylcarbamoyltransferase (346 aa).

The Fe cation site is built by His111 and His115. Residues 134-138, Asp167, Gly180, and Asn277 each bind substrate; that span reads LVSGG. A Fe cation-binding site is contributed by Asp305.

It belongs to the KAE1 / TsaD family. Fe(2+) serves as cofactor.

The protein resides in the cytoplasm. It carries out the reaction L-threonylcarbamoyladenylate + adenosine(37) in tRNA = N(6)-L-threonylcarbamoyladenosine(37) in tRNA + AMP + H(+). Functionally, required for the formation of a threonylcarbamoyl group on adenosine at position 37 (t(6)A37) in tRNAs that read codons beginning with adenine. Is involved in the transfer of the threonylcarbamoyl moiety of threonylcarbamoyl-AMP (TC-AMP) to the N6 group of A37, together with TsaE and TsaB. TsaD likely plays a direct catalytic role in this reaction. This chain is tRNA N6-adenosine threonylcarbamoyltransferase, found in Bordetella bronchiseptica (strain ATCC BAA-588 / NCTC 13252 / RB50) (Alcaligenes bronchisepticus).